The primary structure comprises 447 residues: MKLFGTSGIRMKNLDPLIAYKVGFAISKNFKKAVIGRDTRTTGNLIESAITAGLLNGGCDVTTIGMVPTPVLGYSARDYDLGIMITASHNPPEYNGIKLFNKNGTAFDPKQEEKLEKIIANDDFNEGTWDNIGCASEDKTAVKKYSEYILQNVDIKTNFNVVVDCANAAGCVVSPNIFTEAGCKVISVNSHCDGRFVGRMPEPNETNLKETVDIIKGLNSNGRNYIGIAHDGDADRMIAIDELGRVTDFDKLLAAFCKYVVQKTGADKIVTTVDASMAIDEYLDEFGAKVIRTKIGDVAVAEELEKTGAIFGGEPSGTWIHRDIHLTPDGILSGLRVLEMMEFYGKKLCDIIDEVPSYYNMREKIACPDNLKQKVMDYISKEGKKIFEKEPETLDGVRFSFEKGWMLIRPSGTESYVRVRVEAKDEDFAEKLMENGISMVKTGISEN.

The Phosphoserine intermediate role is filled by Ser-88. 4 residues coordinate Mg(2+): Ser-88, Asp-231, Asp-233, and Asp-235. Ser-88 bears the Phosphoserine mark.

Belongs to the phosphohexose mutase family. It depends on Mg(2+) as a cofactor. Activated by phosphorylation.

The enzyme catalyses alpha-D-glucosamine 1-phosphate = D-glucosamine 6-phosphate. In terms of biological role, catalyzes the conversion of glucosamine-6-phosphate to glucosamine-1-phosphate. This chain is Phosphoglucosamine mutase, found in Methanococcus maripaludis (strain C7 / ATCC BAA-1331).